The following is a 137-amino-acid chain: MSEALKILNNIRTLRAQARECTLETLEEMLEKLEVVVNERREEESAAAAEVEERTRKLQQYREMLIADGIDPNELLNSMAAAKSGTKAKRAARPAKYSYVDENGETKTWTGQGRTPAVIKKAMEEQDKQLEDFLIKE.

Residues 112–117 (QGRTPA) mediate DNA binding.

The protein belongs to the histone-like protein H-NS family. In terms of assembly, homodimer that oligomerizes on DNA into higher-order complexes that form bridges between disparate regions of DNA compacting it. Interacts with Hha, YdgT and StpA.

The protein resides in the cytoplasm. It localises to the nucleoid. Functionally, a DNA-binding protein implicated in transcriptional repression and chromosome organization and compaction. Binds nucleation sites in AT-rich DNA and bridges them, forming higher-order nucleoprotein complexes and condensing the chromosome. As many horizontally transferred genes are AT-rich, it plays a central role in silencing foreign genes. A subset of genes are repressed by H-NS in association with other proteins. The protein is DNA-binding protein H-NS (hns) of Salmonella paratyphi A (strain ATCC 9150 / SARB42).